We begin with the raw amino-acid sequence, 566 residues long: Tissue-type plasminogen activator (566 aa).

Residues 1-21 form the signal peptide; that stretch reads MMSAMKTEFLCVLLLCGAVFT. Positions 22–33 are excised as a propeptide; it reads SPSQETYRRLRR. Positions 34–36 are cleaved as a propeptide — removed by plasmin; sequence GAR. In terms of domain architecture, Fibronectin type-I spans 40–82; it reads VTCRDGKTQMTYRQHDSWLRPLLRGNQVEHCWCDGGRAQCHSV. 17 disulfide bridges follow: C42–C72, C70–C79, C87–C98, C92–C109, C111–C120, C128–C209, C149–C191, C180–C204, C219–C300, C240–C282, C271–C295, C303–C434, C346–C362, C354–C423, C448–C523, C480–C496, and C513–C541. The interval 43–53 is important for binding to annexin A2; that stretch reads RDGKTQMTYRQ. One can recognise an EGF-like domain in the interval 83–121; sequence PVRSCSEPWCFNGGTCRQALYSSDFVCQCPEGFMGKLCE. Kringle domains follow at residues 128 to 209 and 219 to 300; these read CYKD…TPAC and CYTG…VPQC. An N-linked (GlcNAc...) asparagine glycan is attached at N153. The region spanning 315–565 is the Peptidase S1 domain; sequence IKGGLFADIT…YLDWIRDNTR (251 aa). Catalysis depends on charge relay system residues H361 and D410. An N-linked (GlcNAc...) asparagine glycan is attached at N487. Catalysis depends on S517, which acts as the Charge relay system.

It belongs to the peptidase S1 family. As to quaternary structure, heterodimer of chain A and chain B held by a disulfide bond. Binds to fibrin with high affinity. This interaction leads to an increase in the catalytic efficiency of the enzyme due to an increase in affinity for plasminogen. Similarly, binding to heparin increases the activation of plasminogen. Binds to annexin A2, cytokeratin-8, fibronectin and laminin. Binds to mannose receptor and the low-density lipoprotein receptor-related protein (LRP1); these proteins are involved in TPA clearance. Binds LRP1B; binding is followed by internalization and degradation. Forms heterodimer with SERPINA5. Interacts with SERPINE1. In complex with SERPINE1, interacts with SORL1. In terms of processing, the single chain, almost fully active enzyme, can be further processed into a two-chain fully active form by a cleavage after Arg-314 catalyzed by plasmin, tissue kallikrein or factor Xa.

Its subcellular location is the secreted. It is found in the extracellular space. It carries out the reaction Specific cleavage of Arg-|-Val bond in plasminogen to form plasmin.. Inhibited by SERPINA5. Inhibited by SERPINE1. In terms of biological role, converts the abundant, but inactive, zymogen plasminogen to plasmin by hydrolyzing a single Arg-Val bond in plasminogen. By controlling plasmin-mediated proteolysis, it plays an important role in tissue remodeling and degradation, in cell migration and many other physiopathological events. During oocyte activation, plays a role in cortical granule reaction in the zona reaction, which contributes to the block to polyspermy. The sequence is that of Tissue-type plasminogen activator (PLAT) from Bos taurus (Bovine).